We begin with the raw amino-acid sequence, 277 residues long: Bifunctional protein FolD (277 aa).

NADP(+) is bound by residues 159–161, Ser184, and Ile225; that span reads GRS.

This sequence belongs to the tetrahydrofolate dehydrogenase/cyclohydrolase family. As to quaternary structure, homodimer.

The catalysed reaction is (6R)-5,10-methylene-5,6,7,8-tetrahydrofolate + NADP(+) = (6R)-5,10-methenyltetrahydrofolate + NADPH. The enzyme catalyses (6R)-5,10-methenyltetrahydrofolate + H2O = (6R)-10-formyltetrahydrofolate + H(+). It functions in the pathway one-carbon metabolism; tetrahydrofolate interconversion. Its function is as follows. Catalyzes the oxidation of 5,10-methylenetetrahydrofolate to 5,10-methenyltetrahydrofolate and then the hydrolysis of 5,10-methenyltetrahydrofolate to 10-formyltetrahydrofolate. The protein is Bifunctional protein FolD of Acholeplasma laidlawii (strain PG-8A).